Here is a 304-residue protein sequence, read N- to C-terminus: DDRGK domain-containing protein 1 (304 aa).

The Lumenal portion of the chain corresponds to 1–2 (MD). A helical membrane pass occupies residues 3-23 (LIILVGIAIALLVVIISLYLL). At 24 to 304 (QKKNSTTEAK…LTPVSAEGSS (281 aa)) the chain is on the cytoplasmic side. Residues 31 to 174 (EAKPAAAAPQ…AERLAKEERE (144 aa)) form a disordered region. Residues 53–82 (RRAQIARNQRNRLRQNAPVAAAAPQAEAPA) are compositionally biased toward low complexity. Positions 105–174 (LDEKMGAKKR…AERLAKEERE (70 aa)) are enriched in basic and acidic residues.

It belongs to the DDRGK1 family. Interacts with Atg9; the interaction is transient.

The protein resides in the endoplasmic reticulum membrane. Its function is as follows. Substrate adapter for ufmylation, the covalent attachment of the ubiquitin-like modifier UFM1 to substrate proteins. Required for ufmylation of Atg9; protects the nervous system during aging, possibly by stabilizing Atg9 and supporting its function. This chain is DDRGK domain-containing protein 1, found in Drosophila ananassae (Fruit fly).